The following is a 65-amino-acid chain: Large ribosomal subunit protein bL35 (65 aa).

Belongs to the bacterial ribosomal protein bL35 family.

This chain is Large ribosomal subunit protein bL35, found in Prochlorococcus marinus (strain MIT 9313).